Reading from the N-terminus, the 1117-residue chain is Protein rliB (1117 aa).

Positions methionine 1–serine 23 are cleaved as a signal peptide. Residues asparagine 136, asparagine 195, asparagine 279, and asparagine 318 are each glycosylated (N-linked (GlcNAc...) asparagine). Positions serine 266 to serine 392 constitute a G8 domain. PbH1 repeat units follow at residues valine 522 to glycine 544 and threonine 545 to aspartate 567. N-linked (GlcNAc...) asparagine glycosylation is found at asparagine 547 and asparagine 605. One copy of the PbH1 3 repeat lies at asparagine 621–asparagine 642. N-linked (GlcNAc...) asparagine glycans are attached at residues asparagine 728, asparagine 845, asparagine 1030, asparagine 1044, asparagine 1091, and asparagine 1107.

This sequence belongs to the comF family.

The protein localises to the secreted. The polypeptide is Protein rliB (rliB) (Dictyostelium discoideum (Social amoeba)).